Reading from the N-terminus, the 208-residue chain is UPF0301 protein MAB_4928c (208 aa).

The protein belongs to the UPF0301 (AlgH) family.

This Mycobacteroides abscessus (strain ATCC 19977 / DSM 44196 / CCUG 20993 / CIP 104536 / JCM 13569 / NCTC 13031 / TMC 1543 / L948) (Mycobacterium abscessus) protein is UPF0301 protein MAB_4928c.